A 1065-amino-acid chain; its full sequence is NLR family CARD domain-containing protein 3 (1065 aa).

A compositionally biased stretch (basic and acidic residues) spans 1-10; sequence MRKQEVRTGR. The disordered stretch occupies residues 1-62; that stretch reads MRKQEVRTGR…PLGPCSNDSR (62 aa). Positions 139 to 460 constitute an NACHT domain; the sequence is RVSITIGVAG…YCFTHLSLQE (322 aa). 145–152 is a binding site for ATP; it reads GVAGMGKT. The TRAF6-binding signature appears at 457 to 460; it reads SLQE. LRR repeat units lie at residues 617 to 639, 641 to 663, 665 to 688, 693 to 716, 721 to 744, 749 to 772, 777 to 800, 805 to 828, 833 to 856, 861 to 884, 889 to 912, 917 to 940, 945 to 968, 973 to 996, 1001 to 1029, and 1031 to 1052; these read EANL…LLYC, KLRL…VLSG, DCRI…ALAR, NRSL…ALAD, NRTL…SMAE, NRTL…RMAD, NRSL…ALAE, NQGL…ALMG, NQTL…AIAH, NSTL…AIAV, NRTL…ALGQ, NRSL…AVAR, NTAL…VLGE, NRTL…ALAN, NSSL…LSGN, and RLQH…MISE.

This sequence belongs to the NLRP family. As to quaternary structure, directly interacts (via CARD) with TMEM173/STING; this interaction reduces TMEM173 trafficking to the perinuclear region in response to interferon stimulatory DNA. Also interacts, but to a lesser extent, with TBK1. Interacts with TRAF6; this interaction results in decreased TRAF6 'Lys-63'-linked polyubiquitination, but leaves 'Lys-48'-linked chains unchanged, promoting TRAF6 protein degradation. Interacts with PIK3R1/PIK3R2; this interaction disrupts the association between PIK3R1/PIK3R2 and the p110 catalytic subunit PIK3CA/PIK3CB/PIK3CD and reduces PIK3R1/PIK3R2 activation. Weakly interacts with PYCARD/ASC. Interacts with CASP1 and CASP5.

It is found in the cytoplasm. Negative regulator of the innate immune response. Attenuates signaling pathways activated by Toll-like receptors (TLRs) and the DNA sensor STING/TMEM173 in response to pathogen-associated molecular patterns, such as intracellular poly(dA:dT), but not poly(I:C), or in response to DNA virus infection, including that of Herpes simplex virus 1 (HSV1). May affect TLR4 signaling by acting at the level of TRAF6 ubiquitination, decreasing the activating 'Lys-63'-linked ubiquitination and leaving unchanged the degradative 'Lys-48'-linked ubiquitination. Inhibits the PI3K-AKT-mTOR pathway possibly by directly interacting with the posphatidylinositol 3-kinase regulatory subunit p85 (PIK3R1/PIK3R2) and disrupting the association between PIK3R1/PIK3R2 and the catalytic subunit p110 (PIK3CA/PIK3CB/PIK3CD) and reducing PIK3R1/PIK3R2 activation. Via its regulation of the PI3K-AKT-mTOR pathway, controls cell proliferation, predominantly in intestinal epithelial cells. May also affect NOD1- or NOD2-mediated NF-kappa-B activation. Might also affect the inflammatory response by preventing NLRP3 inflammasome formation, CASP1 cleavage and IL1B maturation. This is NLR family CARD domain-containing protein 3 (NLRC3) from Homo sapiens (Human).